The sequence spans 541 residues: L-ornithine N(5)-monooxygenase (541 aa).

FAD contacts are provided by residues 50–58 (EKQPEFQWH) and glutamine 69. Lysine 74 lines the substrate pocket. 223 to 226 (SGQS) is an NADP(+) binding site. Substrate-binding positions include 269–272 (NEIF) and asparagine 300. NADP(+) is bound at residue 300–302 (NYS). A disordered region spans residues 430 to 474 (TEIPKGPDGSLFDASEEEATWRPASPITPASPSPPSTPTSSALSQ). Residue 520–522 (SLL) coordinates FAD. Serine 523 is a binding site for substrate.

This sequence belongs to the lysine N(6)-hydroxylase/L-ornithine N(5)-oxygenase family. As to quaternary structure, homotetramer. FAD is required as a cofactor.

The catalysed reaction is L-ornithine + NADPH + O2 = N(5)-hydroxy-L-ornithine + NADP(+) + H2O. It carries out the reaction L-ornithine + NADH + O2 = N(5)-hydroxy-L-ornithine + NAD(+) + H2O. The protein operates within siderophore biosynthesis. Its function is as follows. L-ornithine N(5)-monooxygenase; part of the siderophore basidioferrin biosynthetic pathway. The biosynthesis of basidioferrin depends on the hydroxylation of ornithine to N(5)-hydroxyornithine, catalyzed by the monooxygenase SMO1. The second step, the acylation of N(5)-hydroxy-L-ornithine is catalyzed by a not yet identified N-acyltransferase. Finally, assembly of basidioferrin is catalyzed by the nonribosomal peptide synthase (NRPS) NPS2 via amide bond formation between three L-AHO molecules to release the linear L-AHO trimer. This is L-ornithine N(5)-monooxygenase (SMO1) from Ceriporiopsis subvermispora (strain B) (White-rot fungus).